A 675-amino-acid polypeptide reads, in one-letter code: Protein REPRESSOR OF VERNALIZATION 1 (675 aa).

Positions 1–143 are disordered; the sequence is MGRRRRFTQQ…DPVKVTGKGK (143 aa). Residues 22–31 are compositionally biased toward low complexity; sequence AEPPKTAKPA. Acidic residues predominate over residues 48–70; the sequence is EEEDEDEEDELELEDEEDDEKDL. A compositionally biased stretch (basic and acidic residues) spans 71–86; the sequence is EEMRRNEEEERREETR. Positions 73 to 80 match the Nuclear localization signal motif; it reads MRRNEEEE. Positions 87–96 are enriched in basic residues; that stretch reads TRRRRGRKPK. Residues 113–127 are compositionally biased toward acidic residues; the sequence is SDEEEEEEVREEDST. The BAH domain occupies 157-275; it reads NTFELEDPVL…TVAKKLWNLT (119 aa). Disordered regions lie at residues 300 to 349, 493 to 512, and 587 to 675; these read ELPD…KPET, GLTPAEKTSEPEESRRLQMT, and LASP…ADHE. Basic and acidic residues-rich tracts occupy residues 333–346, 499–512, and 613–627; these read VSRDATGKSEHFVK, KTSEPEESRRLQMT, and KLEKQKSFTKPKPEE. Residues 372-518 enclose the TFIIS central domain; it reads YRDKWLDKLL…LQMTDARCER (147 aa).

As to expression, expressed constitutively.

It localises to the nucleus. In terms of biological role, component of a grass-specific mechanism of vernalization, a process by which prolonged cold exposure provides competence to flower in daylengths longer than 12 hours. Negative regulator of flowering required for vernalization establishment by repressing VRN1 before vernalization and in the fall season. The chain is Protein REPRESSOR OF VERNALIZATION 1 from Brachypodium distachyon (Purple false brome).